A 480-amino-acid polypeptide reads, in one-letter code: Probable cytosol aminopeptidase (480 aa).

Positions 248 and 253 each coordinate Mn(2+). The active site involves Lys260. Residues Asp271, Asp330, and Glu332 each contribute to the Mn(2+) site. Arg334 is a catalytic residue.

Belongs to the peptidase M17 family. It depends on Mn(2+) as a cofactor.

The protein resides in the cytoplasm. It catalyses the reaction Release of an N-terminal amino acid, Xaa-|-Yaa-, in which Xaa is preferably Leu, but may be other amino acids including Pro although not Arg or Lys, and Yaa may be Pro. Amino acid amides and methyl esters are also readily hydrolyzed, but rates on arylamides are exceedingly low.. The catalysed reaction is Release of an N-terminal amino acid, preferentially leucine, but not glutamic or aspartic acids.. In terms of biological role, presumably involved in the processing and regular turnover of intracellular proteins. Catalyzes the removal of unsubstituted N-terminal amino acids from various peptides. The protein is Probable cytosol aminopeptidase of Solibacter usitatus (strain Ellin6076).